A 138-amino-acid chain; its full sequence is Acidic phospholipase A2 PL1 (138 aa).

The first 16 residues, 1–16, serve as a signal peptide directing secretion; that stretch reads MRALWIVAVCLIGAEG. Disulfide bonds link C42/C131, C44/C60, C59/C111, C65/C138, C66/C104, C73/C97, and C91/C102. Residues Y43, G45, and G47 each coordinate Ca(2+). H63 is an active-site residue. D64 serves as a coordination point for Ca(2+). D105 is an active-site residue.

This sequence belongs to the phospholipase A2 family. Group II subfamily. D49 sub-subfamily. It depends on Ca(2+) as a cofactor. In terms of tissue distribution, expressed by the venom gland.

Its subcellular location is the secreted. The catalysed reaction is a 1,2-diacyl-sn-glycero-3-phosphocholine + H2O = a 1-acyl-sn-glycero-3-phosphocholine + a fatty acid + H(+). Its function is as follows. PLA2 catalyzes the calcium-dependent hydrolysis of the 2-acyl groups in 3-sn-phosphoglycerides. This chain is Acidic phospholipase A2 PL1, found in Vipera renardi (Steppe viper).